The sequence spans 214 residues: uncharacterized protein (214 aa).

A signal peptide spans 1-18 (MTMYIGLILVVLATFCQG). An N-linked (GlcNAc...) asparagine; by host glycan is attached at Asn-64.

This is an uncharacterized protein from Magallana gigas (Pacific oyster).